Consider the following 199-residue polypeptide: Transgelin-3 (199 aa).

Positions 24 to 136 (ADLENKLVDW…RTLMALGSVA (113 aa)) constitute a Calponin-homology (CH) domain. S163 is modified (phosphoserine). One copy of the Calponin-like repeat lies at 174 to 199 (IGLQMGSNKGASQAGMTGYGMPRQIM). Residues 178-188 (MGSNKGASQAG) show a composition bias toward polar residues. The tract at residues 178-199 (MGSNKGASQAGMTGYGMPRQIM) is disordered.

Belongs to the calponin family.

In Bos taurus (Bovine), this protein is Transgelin-3 (TAGLN3).